The chain runs to 240 residues: MQPQYQMGYDRAITVFSPDGRLYQVEYAREAVKRGTTAVGIKCSEGVVLIVDKRVTSRLLEPVSIEKIFKIDAHIGVASSGLVGDARSLVDRARVESQINRVSYNEPINVEILAKKLCDHMQTYTQFGGARPYGTALLIAGVSDGEARLFETDPSGTLLEYKATGIGTGRPAVIKTFEDEYQEDADFSGAIRLGIKALHAATEGKLDVSAIEIGVVSIETGEFRKMEKDEVKAYVDQFEE.

Belongs to the peptidase T1A family. As to quaternary structure, the 20S proteasome core is composed of 14 alpha and 14 beta subunits that assemble into four stacked heptameric rings, resulting in a barrel-shaped structure. The two inner rings, each composed of seven catalytic beta subunits, are sandwiched by two outer rings, each composed of seven alpha subunits. The catalytic chamber with the active sites is on the inside of the barrel. Has a gated structure, the ends of the cylinder being occluded by the N-termini of the alpha-subunits. Is capped at one or both ends by the proteasome regulatory ATPase, PAN.

Its subcellular location is the cytoplasm. The formation of the proteasomal ATPase PAN-20S proteasome complex, via the docking of the C-termini of PAN into the intersubunit pockets in the alpha-rings, triggers opening of the gate for substrate entry. Interconversion between the open-gate and close-gate conformations leads to a dynamic regulation of the 20S proteasome proteolysis activity. Component of the proteasome core, a large protease complex with broad specificity involved in protein degradation. This is Proteasome subunit alpha from Methanoculleus marisnigri (strain ATCC 35101 / DSM 1498 / JR1).